The following is a 488-amino-acid chain: Glutamyl-tRNA(Gln) amidotransferase subunit A (488 aa).

Catalysis depends on charge relay system residues lysine 77 and serine 152. The Acyl-ester intermediate role is filled by serine 176.

Belongs to the amidase family. GatA subfamily. In terms of assembly, heterotrimer of A, B and C subunits.

The catalysed reaction is L-glutamyl-tRNA(Gln) + L-glutamine + ATP + H2O = L-glutaminyl-tRNA(Gln) + L-glutamate + ADP + phosphate + H(+). Functionally, allows the formation of correctly charged Gln-tRNA(Gln) through the transamidation of misacylated Glu-tRNA(Gln) in organisms which lack glutaminyl-tRNA synthetase. The reaction takes place in the presence of glutamine and ATP through an activated gamma-phospho-Glu-tRNA(Gln). This is Glutamyl-tRNA(Gln) amidotransferase subunit A from Streptococcus pyogenes serotype M3 (strain ATCC BAA-595 / MGAS315).